A 122-amino-acid chain; its full sequence is Large ribosomal subunit protein uL14 (122 aa).

The protein belongs to the universal ribosomal protein uL14 family. In terms of assembly, part of the 50S ribosomal subunit. Forms a cluster with proteins L3 and L19. In the 70S ribosome, L14 and L19 interact and together make contacts with the 16S rRNA in bridges B5 and B8.

In terms of biological role, binds to 23S rRNA. Forms part of two intersubunit bridges in the 70S ribosome. This is Large ribosomal subunit protein uL14 from Campylobacter concisus (strain 13826).